The sequence spans 141 residues: Large ribosomal subunit protein uL11 (141 aa).

It belongs to the universal ribosomal protein uL11 family. In terms of assembly, part of the ribosomal stalk of the 50S ribosomal subunit. Interacts with L10 and the large rRNA to form the base of the stalk. L10 forms an elongated spine to which L12 dimers bind in a sequential fashion forming a multimeric L10(L12)X complex. In terms of processing, one or more lysine residues are methylated.

Functionally, forms part of the ribosomal stalk which helps the ribosome interact with GTP-bound translation factors. The chain is Large ribosomal subunit protein uL11 from Thermomicrobium roseum (strain ATCC 27502 / DSM 5159 / P-2).